The primary structure comprises 327 residues: MGSLSEWVQQGWYKGSPWLVPLRPLSALVSFEARRRLQRFRKQRPRPPVPVLVVGNITVGGTGKTPLVIALVEAARSRGLKVAVVSRGFAGKTNHYPQHVTASSDALDMGDEPVLIARRTGVPVVLDPDRRNALDVAIREYAPDLVISDDGLQHYALPRSAEVVVVDAQRGLGNGRCLPEGPLREPATRLKEVDFVISTGGGWAGAYPMIMRPSGVTCLADNRTLTPDDFLRLHPQVHAVAGIGNPKRFFNLLSILGLSATPHVFPDHHAYQPADLAFTDGLPVLMTEKDAVKCAPFAEPHWWFVPVTASLPEGLLDQMLDRALGKE.

58 to 65 is a binding site for ATP; sequence TVGGTGKT.

Belongs to the LpxK family.

It carries out the reaction a lipid A disaccharide + ATP = a lipid IVA + ADP + H(+). Its pathway is glycolipid biosynthesis; lipid IV(A) biosynthesis; lipid IV(A) from (3R)-3-hydroxytetradecanoyl-[acyl-carrier-protein] and UDP-N-acetyl-alpha-D-glucosamine: step 6/6. Its function is as follows. Transfers the gamma-phosphate of ATP to the 4'-position of a tetraacyldisaccharide 1-phosphate intermediate (termed DS-1-P) to form tetraacyldisaccharide 1,4'-bis-phosphate (lipid IVA). The polypeptide is Tetraacyldisaccharide 4'-kinase (Alcanivorax borkumensis (strain ATCC 700651 / DSM 11573 / NCIMB 13689 / SK2)).